Reading from the N-terminus, the 152-residue chain is Transcriptional regulator MraZ (152 aa).

SpoVT-AbrB domains are found at residues 5–52 (ANAV…PLPE) and 81–124 (AVDL…NEDA).

The protein belongs to the MraZ family. Forms oligomers.

It is found in the cytoplasm. Its subcellular location is the nucleoid. This Azotobacter vinelandii (strain DJ / ATCC BAA-1303) protein is Transcriptional regulator MraZ.